The chain runs to 344 residues: Heat-inducible transcription repressor HrcA (344 aa).

Belongs to the HrcA family.

Negative regulator of class I heat shock genes (grpE-dnaK-dnaJ and groELS operons). Prevents heat-shock induction of these operons. In Geobacillus stearothermophilus (Bacillus stearothermophilus), this protein is Heat-inducible transcription repressor HrcA.